Reading from the N-terminus, the 218-residue chain is Riboflavin kinase (218 aa).

The signal sequence occupies residues methionine 1–leucine 19. Mg(2+)-binding residues include threonine 72 and asparagine 74. Glutamate 155 functions as the Nucleophile in the catalytic mechanism.

It belongs to the flavokinase family. Zn(2+) is required as a cofactor. Mg(2+) serves as cofactor.

It is found in the microsome. It localises to the mitochondrion inner membrane. The protein localises to the endoplasmic reticulum. The catalysed reaction is riboflavin + ATP = FMN + ADP + H(+). The protein operates within cofactor biosynthesis; FMN biosynthesis; FMN from riboflavin (ATP route): step 1/1. Its function is as follows. Catalyzes the phosphorylation of riboflavin (vitamin B2) to form flavin mononucleotide (FMN) coenzyme. This is Riboflavin kinase (FMN1) from Saccharomyces cerevisiae (strain ATCC 204508 / S288c) (Baker's yeast).